A 367-amino-acid polypeptide reads, in one-letter code: Cyclin-D3-2 (367 aa).

Positions 324–335 are enriched in low complexity; that stretch reads STTASVSSSSSS. The segment at 324-347 is disordered; that stretch reads STTASVSSSSSSPEPLLKRRRVQE.

This sequence belongs to the cyclin family. Cyclin D subfamily. In terms of assembly, interacts with CDKA-1. As to expression, expressed in developing vegetative and floral primordia.

Functionally, promotes divisions in the guard cells (GCs) after the guard mother cells (GMC) symmetric division when in the presence of CDKA-1. This is Cyclin-D3-2 (CYCD3-2) from Arabidopsis thaliana (Mouse-ear cress).